Consider the following 282-residue polypeptide: Probable endonuclease 4 (282 aa).

Zn(2+)-binding residues include His-69, His-109, Glu-145, Asp-179, His-182, His-216, Asp-229, His-231, and Glu-261.

It belongs to the AP endonuclease 2 family. Zn(2+) serves as cofactor.

The catalysed reaction is Endonucleolytic cleavage to 5'-phosphooligonucleotide end-products.. Functionally, endonuclease IV plays a role in DNA repair. It cleaves phosphodiester bonds at apurinic or apyrimidinic (AP) sites, generating a 3'-hydroxyl group and a 5'-terminal sugar phosphate. The protein is Probable endonuclease 4 of Campylobacter fetus subsp. fetus (strain 82-40).